Consider the following 379-residue polypeptide: Eukaryotic translation initiation factor 3 subunit M (379 aa).

The PCI domain maps to arginine 179–glutamine 341.

It belongs to the eIF-3 subunit M family. In terms of assembly, component of the eukaryotic translation initiation factor 3 (eIF-3) complex.

It is found in the cytoplasm. In terms of biological role, component of the eukaryotic translation initiation factor 3 (eIF-3) complex, which is involved in protein synthesis of a specialized repertoire of mRNAs and, together with other initiation factors, stimulates binding of mRNA and methionyl-tRNAi to the 40S ribosome. The eIF-3 complex specifically targets and initiates translation of a subset of mRNAs involved in cell proliferation. This Nematostella vectensis (Starlet sea anemone) protein is Eukaryotic translation initiation factor 3 subunit M.